Here is a 226-residue protein sequence, read N- to C-terminus: 7-cyano-7-deazaguanine synthase (226 aa).

8–18 is an ATP binding site; that stretch reads ISGGLDSTTCL. Cysteine 188, cysteine 198, cysteine 201, and cysteine 204 together coordinate Zn(2+).

It belongs to the QueC family. Zn(2+) is required as a cofactor.

The enzyme catalyses 7-carboxy-7-deazaguanine + NH4(+) + ATP = 7-cyano-7-deazaguanine + ADP + phosphate + H2O + H(+). Its pathway is purine metabolism; 7-cyano-7-deazaguanine biosynthesis. In terms of biological role, catalyzes the ATP-dependent conversion of 7-carboxy-7-deazaguanine (CDG) to 7-cyano-7-deazaguanine (preQ(0)). This Coxiella burnetii (strain Dugway 5J108-111) protein is 7-cyano-7-deazaguanine synthase.